The primary structure comprises 116 residues: Large ribosomal subunit protein bL19 (116 aa).

This sequence belongs to the bacterial ribosomal protein bL19 family.

In terms of biological role, this protein is located at the 30S-50S ribosomal subunit interface and may play a role in the structure and function of the aminoacyl-tRNA binding site. This Geobacillus stearothermophilus (Bacillus stearothermophilus) protein is Large ribosomal subunit protein bL19 (rplS).